The following is a 302-amino-acid chain: Small ribosomal subunit biogenesis GTPase RsgA (302 aa).

Residues 69–229 (KNLLIRPKVA…VGDTPGFSKV (161 aa)) enclose the CP-type G domain. Residues 118–121 (NKID) and 172–180 (GPSGVGKSS) each bind GTP. 4 residues coordinate Zn(2+): C252, C257, H259, and C265.

This sequence belongs to the TRAFAC class YlqF/YawG GTPase family. RsgA subfamily. In terms of assembly, monomer. Associates with 30S ribosomal subunit, binds 16S rRNA. It depends on Zn(2+) as a cofactor.

The protein resides in the cytoplasm. In terms of biological role, one of several proteins that assist in the late maturation steps of the functional core of the 30S ribosomal subunit. Helps release RbfA from mature subunits. May play a role in the assembly of ribosomal proteins into the subunit. Circularly permuted GTPase that catalyzes slow GTP hydrolysis, GTPase activity is stimulated by the 30S ribosomal subunit. The polypeptide is Small ribosomal subunit biogenesis GTPase RsgA (Aquifex aeolicus (strain VF5)).